The chain runs to 155 residues: S-ribosylhomocysteine lyase (155 aa).

Residues H54, H58, and C122 each contribute to the Fe cation site.

It belongs to the LuxS family. As to quaternary structure, homodimer. The cofactor is Fe cation.

It carries out the reaction S-(5-deoxy-D-ribos-5-yl)-L-homocysteine = (S)-4,5-dihydroxypentane-2,3-dione + L-homocysteine. Functionally, involved in the synthesis of autoinducer 2 (AI-2) which is secreted by bacteria and is used to communicate both the cell density and the metabolic potential of the environment. The regulation of gene expression in response to changes in cell density is called quorum sensing. Catalyzes the transformation of S-ribosylhomocysteine (RHC) to homocysteine (HC) and 4,5-dihydroxy-2,3-pentadione (DPD). In Deinococcus geothermalis (strain DSM 11300 / CIP 105573 / AG-3a), this protein is S-ribosylhomocysteine lyase.